A 90-amino-acid chain; its full sequence is Probable Fe(2+)-trafficking protein (90 aa).

This sequence belongs to the Fe(2+)-trafficking protein family.

Could be a mediator in iron transactions between iron acquisition and iron-requiring processes, such as synthesis and/or repair of Fe-S clusters in biosynthetic enzymes. This chain is Probable Fe(2+)-trafficking protein, found in Idiomarina loihiensis (strain ATCC BAA-735 / DSM 15497 / L2-TR).